Here is a 213-residue protein sequence, read N- to C-terminus: uncharacterized protein (213 aa).

3 consecutive transmembrane segments (helical) span residues 26–46 (FINF…GLKV), 112–132 (ASYI…AGIW), and 136–156 (AGLA…SFLI).

It is found in the cell membrane. This is an uncharacterized protein from Haemophilus influenzae (strain ATCC 51907 / DSM 11121 / KW20 / Rd).